We begin with the raw amino-acid sequence, 243 residues long: tRNA pseudouridine synthase A (243 aa).

Catalysis depends on Asp-53, which acts as the Nucleophile. Substrate is bound at residue Tyr-111.

This sequence belongs to the tRNA pseudouridine synthase TruA family. Homodimer.

It catalyses the reaction uridine(38/39/40) in tRNA = pseudouridine(38/39/40) in tRNA. In terms of biological role, formation of pseudouridine at positions 38, 39 and 40 in the anticodon stem and loop of transfer RNAs. The sequence is that of tRNA pseudouridine synthase A from Chlorobium chlorochromatii (strain CaD3).